A 328-amino-acid chain; its full sequence is Thiamine thiazole synthase (328 aa).

Substrate-binding positions include Ala-87, 108 to 109, Gly-116, and Val-181; that span reads EA. Cys-215 bears the 2,3-didehydroalanine (Cys) mark. Residues Asp-217, His-232, Met-284, and 294–296 each bind substrate; that span reads RMG.

It belongs to the THI4 family. In terms of assembly, homooctamer. Fe cation is required as a cofactor. Post-translationally, during the catalytic reaction, a sulfide is transferred from Cys-215 to a reaction intermediate, generating a dehydroalanine residue.

The protein localises to the cytoplasm. It localises to the nucleus. The enzyme catalyses [ADP-thiazole synthase]-L-cysteine + glycine + NAD(+) = [ADP-thiazole synthase]-dehydroalanine + ADP-5-ethyl-4-methylthiazole-2-carboxylate + nicotinamide + 3 H2O + 2 H(+). In terms of biological role, involved in biosynthesis of the thiamine precursor thiazole. Catalyzes the conversion of NAD and glycine to adenosine diphosphate 5-(2-hydroxyethyl)-4-methylthiazole-2-carboxylic acid (ADT), an adenylated thiazole intermediate. The reaction includes an iron-dependent sulfide transfer from a conserved cysteine residue of the protein to a thiazole intermediate. The enzyme can only undergo a single turnover, which suggests it is a suicide enzyme. May have additional roles in adaptation to various stress conditions and in DNA damage tolerance. The sequence is that of Thiamine thiazole synthase (thi2) from Schizosaccharomyces pombe (strain 972 / ATCC 24843) (Fission yeast).